The primary structure comprises 107 residues: Serine-rich and transmembrane domain-containing protein 1 (107 aa).

The chain crosses the membrane as a helical span at residues 43–63 (IYVSIFLSLLAFLLLLLIIAL).

The protein resides in the membrane. This Homo sapiens (Human) protein is Serine-rich and transmembrane domain-containing protein 1 (SERTM1).